The primary structure comprises 978 residues: Regulator of telomere elongation helicase 1 homolog (978 aa).

One can recognise a Helicase ATP-binding domain in the interval 7–318; sequence NGIPVNFPFE…EDDDAKKDFT (312 aa). ATP is bound at residue 42–49; that stretch reads SPTGTGKT. Cysteine 159, cysteine 177, cysteine 186, and cysteine 222 together coordinate [4Fe-4S] cluster. Residues 265–268 carry the DEAH box motif; it reads DEAH.

The protein belongs to the helicase family. RAD3/XPD subfamily.

The protein resides in the nucleus. It catalyses the reaction ATP + H2O = ADP + phosphate + H(+). In terms of biological role, a probable ATP-dependent DNA helicase implicated in DNA repair and the maintenance of genomic stability. Acts as an anti-recombinase to counteract toxic recombination and limit crossover during meiosis. Regulates meiotic recombination and crossover homeostasis by physically dissociating strand invasion events and thereby promotes noncrossover repair by meiotic synthesis dependent strand annealing (SDSA) as well as disassembly of D loop recombination intermediates. This chain is Regulator of telomere elongation helicase 1 homolog, found in Culex quinquefasciatus (Southern house mosquito).